A 563-amino-acid polypeptide reads, in one-letter code: CTP synthase (563 aa).

The interval 1-280 is amidoligase domain; that stretch reads MTKFVFVTGG…DEMICMKLQL (280 aa). CTP is bound at residue serine 13. Serine 13 serves as a coordination point for UTP. ATP is bound by residues 14–19 and aspartate 71; that span reads SLGKGI. Positions 71 and 154 each coordinate Mg(2+). Residues 161–163, 201–206, and lysine 237 each bind CTP; these read DIE and KTKPTQ. UTP is bound by residues 201 to 206 and lysine 237; that span reads KTKPTQ. Residues 305–557 enclose the Glutamine amidotransferase type-1 domain; that stretch reads TIAMAGKYTE…IAAALEHHAA (253 aa). Residue glycine 366 participates in L-glutamine binding. Cysteine 393 acts as the Nucleophile; for glutamine hydrolysis in catalysis. L-glutamine contacts are provided by residues 394–397, glutamate 417, and arginine 483; that span reads LGMQ. Residues histidine 530 and glutamate 532 contribute to the active site.

The protein belongs to the CTP synthase family. In terms of assembly, homotetramer.

It catalyses the reaction UTP + L-glutamine + ATP + H2O = CTP + L-glutamate + ADP + phosphate + 2 H(+). The catalysed reaction is L-glutamine + H2O = L-glutamate + NH4(+). The enzyme catalyses UTP + NH4(+) + ATP = CTP + ADP + phosphate + 2 H(+). Its pathway is pyrimidine metabolism; CTP biosynthesis via de novo pathway; CTP from UDP: step 2/2. Its activity is regulated as follows. Allosterically activated by GTP, when glutamine is the substrate; GTP has no effect on the reaction when ammonia is the substrate. The allosteric effector GTP functions by stabilizing the protein conformation that binds the tetrahedral intermediate(s) formed during glutamine hydrolysis. Inhibited by the product CTP, via allosteric rather than competitive inhibition. Functionally, catalyzes the ATP-dependent amination of UTP to CTP with either L-glutamine or ammonia as the source of nitrogen. Regulates intracellular CTP levels through interactions with the four ribonucleotide triphosphates. The chain is CTP synthase from Leptothrix cholodnii (strain ATCC 51168 / LMG 8142 / SP-6) (Leptothrix discophora (strain SP-6)).